Here is a 483-residue protein sequence, read N- to C-terminus: Proton-coupled amino acid transporter 2 (483 aa).

Over 1–58 (MSVTKSTEGPQGAVAIKLDLMSPPESAKKLENKDSTFLDESPSESAGLKKTKGITVFQ) the chain is Cytoplasmic. Residues 26 to 36 (SAKKLENKDST) show a composition bias toward basic and acidic residues. Residues 26–46 (SAKKLENKDSTFLDESPSESA) form a disordered region. A helical transmembrane segment spans residues 59 to 79 (ALIHLVKGNMGTGILGLPLAV). Topologically, residues 80–81 (KN) are extracellular. A helical membrane pass occupies residues 82 to 102 (AGILMGPLSLLVMGFIACHCM). At 103 to 148 (HILVKCAQRFCKRLNKPFMDYGDTVMHGLEANPNAWLQNHAHWGRH) the chain is on the cytoplasmic side. A helical transmembrane segment spans residues 149-169 (IVSFFLIITQLGFCCVYIVFL). Over 170–197 (ADNLKQVVEAVNSTTNNCYSNETVILTP) the chain is Extracellular. A helical transmembrane segment spans residues 198–218 (TMDSRLYMLSFLPFLVLLVLI). The Cytoplasmic segment spans residues 219 to 222 (RNLR). Residues 223 to 243 (ILTIFSMLANISMLVSLVIII) form a helical membrane-spanning segment. Residues 244–264 (QYITQEIPDPSRLPLVASWKT) lie on the Extracellular side of the membrane. A helical transmembrane segment spans residues 265 to 285 (YPLFFGTAIFSFESIGVVLPL). Topologically, residues 286-296 (ENKMKNARHFP) are cytoplasmic. The helical transmembrane segment at 297–317 (AILSLGMSIVTSLYIGMAALG) threads the bilayer. Residues 318-349 (YLRFGDDIKASISLNLPNCWLYQSVKLLYIAG) are Extracellular-facing. A helical transmembrane segment spans residues 350-370 (ILCTYALQFYVPAEIIIPFAI). The Cytoplasmic segment spans residues 371-379 (SRVSTRWAL). A helical transmembrane segment spans residues 380 to 400 (PLDLSIRLVMVCLTCLLAILI). The Extracellular segment spans residues 401–404 (PRLD). Residues 405 to 425 (LVISLVGSVSGTALALIIPPL) traverse the membrane as a helical segment. Over 426 to 437 (LEVTTFYSEGMS) the chain is Cytoplasmic. Residues 438–458 (PLTIFKDALISILGFVGFVVG) traverse the membrane as a helical segment. The Extracellular portion of the chain corresponds to 459 to 483 (TYQALDELLKSEDSHPFSNSTTFVR).

The protein belongs to the amino acid/polyamine transporter 2 family. Abundantly expressed in kidney and muscle. Expressed in the S1 segment of the proximal tubule close to the glomerulus.

The protein resides in the cell membrane. It is found in the endoplasmic reticulum membrane. Its subcellular location is the recycling endosome membrane. It carries out the reaction glycine(in) + H(+)(in) = glycine(out) + H(+)(out). It catalyses the reaction L-alanine(in) + H(+)(in) = L-alanine(out) + H(+)(out). The enzyme catalyses D-alanine(in) + H(+)(in) = D-alanine(out) + H(+)(out). The catalysed reaction is L-proline(out) + H(+)(out) = L-proline(in) + H(+)(in). It carries out the reaction D-proline(out) + H(+)(out) = D-proline(in) + H(+)(in). It catalyses the reaction 4-hydroxy-L-proline(in) + H(+)(in) = 4-hydroxy-L-proline(out) + H(+)(out). The enzyme catalyses L-serine(in) + H(+)(in) = L-serine(out) + H(+)(out). The catalysed reaction is D-serine(out) + H(+)(out) = D-serine(in) + H(+)(in). It carries out the reaction beta-alanine(in) + H(+)(in) = beta-alanine(out) + H(+)(out). It catalyses the reaction 4-aminobutanoate(in) + H(+)(in) = 4-aminobutanoate(out) + H(+)(out). The enzyme catalyses sarcosine(in) + H(+)(in) = sarcosine(out) + H(+)(out). The catalysed reaction is N,N-dimethylglycine(in) + H(+)(in) = N,N-dimethylglycine(out) + H(+)(out). In terms of biological role, electrogenic proton/amino acid symporter with a high selectivity for the small side chains amino acids glycine, alanine and proline, where both L- and D-enantiomers are transported. Extension of the backbone length, as in beta-alanine and 4-aminobutanoate or methylation of the amino group, as in sarcosine and N,N-dimethylglycine, are also tolerated but decrease transport efficiency. A free carboxyl group is preferred. The protein is Proton-coupled amino acid transporter 2 of Homo sapiens (Human).